We begin with the raw amino-acid sequence, 673 residues long: Sodium/myo-inositol cotransporter 2 (673 aa).

Residues 1–27 are Extracellular-facing; the sequence is MESATISPQPPQSDSLEAFPQKSMEPA. Residues 28–48 form a helical membrane-spanning segment; the sequence is DIAVLVLYFLFVLAVGLWSTV. Residues 49–65 lie on the Cytoplasmic side of the membrane; the sequence is RTKRDTVKGYFLAGGDM. A helical transmembrane segment spans residues 66–88; that stretch reads VWWPVGASLFASNVGSGHFIGLA. Topologically, residues 89 to 102 are extracellular; the sequence is GSGAAVGISVAAYE. The chain crosses the membrane as a helical span at residues 103-123; sequence LNGLFSVLMLAWVFLPIYIAG. At 124-148 the chain is on the cytoplasmic side; that stretch reads QVTTMPEYLRRRFGGNRISITLAVL. A helical transmembrane segment spans residues 149–169; sequence YLFIYIFTKISVDMYAGAIFI. At 170–180 the chain is on the extracellular side; sequence QQSLHLDLYLA. A helical membrane pass occupies residues 181 to 201; the sequence is IVGLLAITALYTVAGGLAAVI. Residues 202–208 are Cytoplasmic-facing; it reads YTDALQT. The chain crosses the membrane as a helical span at residues 209–229; it reads VIMLIGAFILMGYSFAAVGGM. At 230-272 the chain is on the extracellular side; sequence EGLKDQYFLALASNRSENSSCGLPREDAFHIFRDPLTSDLPWP. A helical transmembrane segment spans residues 273 to 293; it reads GILFGMSIPSLWYWCTDQVIV. The Cytoplasmic segment spans residues 294 to 308; that stretch reads QRSLAAKNLSHAKGG. A helical membrane pass occupies residues 309-329; that stretch reads SLMAAYLKVLPLFLMVFPGMV. Topologically, residues 330–375 are extracellular; it reads SRVLFPDQVACAHPDICQRVCSNPSGCSDIAYPKLVLELLPTGLRG. The helical transmembrane segment at 376–396 threads the bilayer; the sequence is LMMAVMVAALMSSLTSIFNSA. Residues 397–418 lie on the Cytoplasmic side of the membrane; it reads STIFTMDLWNHIRPRASERELM. A helical membrane pass occupies residues 419-439; that stretch reads IVGRIFVFALVLVSILWIPIV. The Extracellular segment spans residues 440 to 446; sequence QASQGGQ. The helical transmembrane segment at 447–467 threads the bilayer; the sequence is LFIYIQSISSYLQPPVAMVFI. The Cytoplasmic segment spans residues 468–479; that stretch reads MGCFWKRTNEKG. A helical membrane pass occupies residues 480-500; the sequence is AFSGLILGLLLGLVRLILDFV. Residues 501 to 521 lie on the Extracellular side of the membrane; it reads YAQPRCDQPDDRPAVVKDVHY. A helical membrane pass occupies residues 522-542; it reads LYFSMILSFTTLITVVTVSWF. The Cytoplasmic portion of the chain corresponds to 543 to 652; the sequence is TETPSKEMVS…SLEENPLVKT (110 aa). A helical membrane pass occupies residues 653–673; sequence LLDVNCIVCISCAIFLWGYFA.

Belongs to the sodium:solute symporter (SSF) (TC 2.A.21) family.

Its subcellular location is the membrane. The protein resides in the apical cell membrane. It carries out the reaction myo-inositol(out) + 2 Na(+)(out) = myo-inositol(in) + 2 Na(+)(in). It catalyses the reaction 1D-chiro-inositol(out) + 2 Na(+)(out) = 1D-chiro-inositol(in) + 2 Na(+)(in). The catalysed reaction is D-glucose(out) + 2 Na(+)(out) = D-glucose(in) + 2 Na(+)(in). The enzyme catalyses D-xylose(out) + 2 Na(+)(out) = D-xylose(in) + 2 Na(+)(in). MI transport activity inhibited by D-chiro-inositol (DCI), phlorizin (Pz) and sodium (Na(+)). Insulin increases D-chiro-inositol uptake. Functionally, involved in the sodium-dependent cotransport of myo-inositol (MI) with a Na(+):MI stoichiometry of 2:1. Exclusively responsible for apical MI transport and absorption in intestine. Can also transport D-chiro-inositol (DCI) but not L-fucose. Exhibits stereospecific cotransport of both D-glucose and D-xylose. May induce apoptosis through the TNF-alpha, PDCD1 pathway. May play a role in the regulation of MI concentration in serum, involving reabsorption in at least the proximal tubule of the kidney. The chain is Sodium/myo-inositol cotransporter 2 from Mus musculus (Mouse).